The chain runs to 329 residues: Putative glucose-6-phosphate 1-epimerase (329 aa).

Low complexity predominate over residues 1 to 13 (MAAPAPAGAAASP). Residues 1–20 (MAAPAPAGAAASPSPKPQLP) are disordered. R82, Q100, and R105 together coordinate substrate. Residue H183 is part of the active site. D228 is a binding site for substrate. The active site involves E287.

This sequence belongs to the glucose-6-phosphate 1-epimerase family.

The enzyme catalyses alpha-D-glucose 6-phosphate = beta-D-glucose 6-phosphate. The sequence is that of Putative glucose-6-phosphate 1-epimerase from Cenchrus ciliaris (Buffelgrass).